The primary structure comprises 511 residues: Maturase K (511 aa).

It belongs to the intron maturase 2 family. MatK subfamily.

It localises to the plastid. Its subcellular location is the chloroplast. In terms of biological role, usually encoded in the trnK tRNA gene intron. Probably assists in splicing its own and other chloroplast group II introns. The polypeptide is Maturase K (Hordeum murinum subsp. leporinum (Mouse barley)).